Consider the following 483-residue polypeptide: Probable ATP-dependent RNA helicase DDX49 (483 aa).

The Q motif motif lies at 2–30 (AGFAELGLSSWLVEQCRQLGLKQPTPVQL). One can recognise a Helicase ATP-binding domain in the interval 33–207 (IPAILEGRDC…GLATNQPFFW (175 aa)). ATP is bound at residue 46–53 (AKTGSGKT). Residues 152–155 (DEAD) carry the DEAD box motif. The Helicase C-terminal domain maps to 218-382 (QLDQRYLLVP…EFSVEEAEVL (165 aa)). Positions 444-483 (KEKVEETLKRQKAGRAGHKGRPPRTPSGSHSGPVPSQGLV) are disordered. The span at 453 to 465 (RQKAGRAGHKGRP) shows a compositional bias: basic residues.

The protein belongs to the DEAD box helicase family. DDX49/DBP8 subfamily.

The protein localises to the nucleus. It is found in the nucleolus. The catalysed reaction is ATP + H2O = ADP + phosphate + H(+). In terms of biological role, ATP-dependent RNA helicase that plays a role in various aspects of RNA metabolism including the regulation of mRNA export and the levels of pre-ribosomal RNA. Regulates the stability and synthesis of pre-ribosomal RNA and thereby regulates cell proliferation. Also possesses antiviral activity by recognizing gammaherpesvirus transcripts in the context of lytic reactivation. This chain is Probable ATP-dependent RNA helicase DDX49 (DDX49), found in Homo sapiens (Human).